A 229-amino-acid polypeptide reads, in one-letter code: Large ribosomal subunit protein uL1 (229 aa).

The protein belongs to the universal ribosomal protein uL1 family. As to quaternary structure, part of the 50S ribosomal subunit.

Binds directly to 23S rRNA. The L1 stalk is quite mobile in the ribosome, and is involved in E site tRNA release. Its function is as follows. Protein L1 is also a translational repressor protein, it controls the translation of the L11 operon by binding to its mRNA. The sequence is that of Large ribosomal subunit protein uL1 from Phenylobacterium zucineum (strain HLK1).